The primary structure comprises 264 residues: S-adenosylmethionine decarboxylase proenzyme (264 aa).

The active-site Schiff-base intermediate with substrate; via pyruvic acid is Ser-112. Pyruvic acid (Ser); by autocatalysis is present on Ser-112. His-117 acts as the Proton acceptor; for processing activity in catalysis. Residue Cys-140 is the Proton donor; for catalytic activity of the active site.

It belongs to the prokaryotic AdoMetDC family. Type 2 subfamily. Heterooctamer of four alpha and four beta chains arranged as a tetramer of alpha/beta heterodimers. It depends on pyruvate as a cofactor. Post-translationally, is synthesized initially as an inactive proenzyme. Formation of the active enzyme involves a self-maturation process in which the active site pyruvoyl group is generated from an internal serine residue via an autocatalytic post-translational modification. Two non-identical subunits are generated from the proenzyme in this reaction, and the pyruvate is formed at the N-terminus of the alpha chain, which is derived from the carboxyl end of the proenzyme. The post-translation cleavage follows an unusual pathway, termed non-hydrolytic serinolysis, in which the side chain hydroxyl group of the serine supplies its oxygen atom to form the C-terminus of the beta chain, while the remainder of the serine residue undergoes an oxidative deamination to produce ammonia and the pyruvoyl group blocking the N-terminus of the alpha chain.

It catalyses the reaction S-adenosyl-L-methionine + H(+) = S-adenosyl 3-(methylsulfanyl)propylamine + CO2. It participates in amine and polyamine biosynthesis; S-adenosylmethioninamine biosynthesis; S-adenosylmethioninamine from S-adenosyl-L-methionine: step 1/1. Its function is as follows. Catalyzes the decarboxylation of S-adenosylmethionine to S-adenosylmethioninamine (dcAdoMet), the propylamine donor required for the synthesis of the polyamines spermine and spermidine from the diamine putrescine. The sequence is that of S-adenosylmethionine decarboxylase proenzyme from Yersinia enterocolitica serotype O:8 / biotype 1B (strain NCTC 13174 / 8081).